Here is a 929-residue protein sequence, read N- to C-terminus: Probable LRR receptor-like serine/threonine-protein kinase At1g67720 (929 aa).

The signal sequence occupies residues 1 to 21 (MGLCLAQLAVTCLFLVPFVLS). Over 22-531 (QVTEFVSIDC…NEAQRKHFWQ (510 aa)) the chain is Extracellular. N-linked (GlcNAc...) asparagine glycosylation is found at asparagine 36, asparagine 173, asparagine 236, asparagine 293, asparagine 320, asparagine 332, and asparagine 407. LRR repeat units lie at residues 413–437 (PPRV…INYM), 438–460 (EALT…MSKL), 461–484 (VNLK…LAHL), and 485–508 (PNLQ…LLKG). Asparagine 494 is a glycosylation site (N-linked (GlcNAc...) asparagine). Residues 532–552 (ILGISIAAVAILLLLVGGSLV) traverse the membrane as a helical segment. The Cytoplasmic segment spans residues 553–929 (LLCALRKTKR…SRNSLAPAAR (377 aa)). Residues 606 to 880 (DNFSKKVGRG…EVIVAIQDAI (275 aa)) enclose the Protein kinase domain. Residues 612-620 (VGRGSFGSV) and lysine 634 contribute to the ATP site. A Phosphotyrosine modification is found at tyrosine 679. The active-site Proton acceptor is aspartate 731. Serine 735 and serine 764 each carry phosphoserine. At threonine 770 the chain carries Phosphothreonine. Tyrosine 778 is modified (phosphotyrosine).

The protein belongs to the protein kinase superfamily. Ser/Thr protein kinase family.

The protein resides in the membrane. It carries out the reaction L-seryl-[protein] + ATP = O-phospho-L-seryl-[protein] + ADP + H(+). It catalyses the reaction L-threonyl-[protein] + ATP = O-phospho-L-threonyl-[protein] + ADP + H(+). This is Probable LRR receptor-like serine/threonine-protein kinase At1g67720 from Arabidopsis thaliana (Mouse-ear cress).